The following is a 166-amino-acid chain: Large ribosomal subunit protein uL10 (166 aa).

The protein belongs to the universal ribosomal protein uL10 family. Part of the ribosomal stalk of the 50S ribosomal subunit. The N-terminus interacts with L11 and the large rRNA to form the base of the stalk. The C-terminus forms an elongated spine to which L12 dimers bind in a sequential fashion forming a multimeric L10(L12)X complex.

In terms of biological role, forms part of the ribosomal stalk, playing a central role in the interaction of the ribosome with GTP-bound translation factors. The sequence is that of Large ribosomal subunit protein uL10 from Shewanella baltica (strain OS223).